Here is a 378-residue protein sequence, read N- to C-terminus: Tetraacyldisaccharide 4'-kinase (378 aa).

63-70 (AVGGAGKT) contacts ATP.

This sequence belongs to the LpxK family.

It carries out the reaction a lipid A disaccharide + ATP = a lipid IVA + ADP + H(+). It functions in the pathway glycolipid biosynthesis; lipid IV(A) biosynthesis; lipid IV(A) from (3R)-3-hydroxytetradecanoyl-[acyl-carrier-protein] and UDP-N-acetyl-alpha-D-glucosamine: step 6/6. Transfers the gamma-phosphate of ATP to the 4'-position of a tetraacyldisaccharide 1-phosphate intermediate (termed DS-1-P) to form tetraacyldisaccharide 1,4'-bis-phosphate (lipid IVA). In Anaeromyxobacter dehalogenans (strain 2CP-C), this protein is Tetraacyldisaccharide 4'-kinase.